Reading from the N-terminus, the 169-residue chain is Lutropin/choriogonadotropin subunit beta (169 aa).

An N-terminal signal peptide occupies residues 1–20 (METLQGLLLWMLLSVGGVWA). 6 disulfide bridges follow: cysteine 29–cysteine 77, cysteine 43–cysteine 92, cysteine 46–cysteine 130, cysteine 54–cysteine 108, cysteine 58–cysteine 110, and cysteine 113–cysteine 120. Asparagine 33 carries an N-linked (GlcNAc...) asparagine glycan. A disordered region spans residues 131 to 169 (APQASSSSKDPPSQPLTSTSTPTPGASRRSSHPLPIKTS). O-linked (GalNAc...) serine glycosylation is found at serine 138 and serine 143. The span at 145-158 (PLTSTSTPTPGASR) shows a compositional bias: low complexity. Threonine 147 is a glycosylation site (O-linked (GalNAc...) threonine). Serine 148 carries O-linked (GalNAc...) serine glycosylation. Threonine 149 carries an O-linked (GalNAc...) threonine glycan. Serine 150 carries O-linked (GalNAc...) serine glycosylation. Residues threonine 151 and threonine 153 are each glycosylated (O-linked (GalNAc...) threonine). Residues serine 157, serine 160, serine 161, and serine 169 are each glycosylated (O-linked (GalNAc...) serine).

The protein belongs to the glycoprotein hormones subunit beta family. As to quaternary structure, heterodimer of a common alpha chain and a unique beta chain which confers biological specificity to thyrotropin, lutropin, follitropin and gonadotropin. Microheterogeneity at Asn-33. O-glycosylation appears to be responsible for the beta subunit contribution to the difference in LH-receptor binding activity between LSH-B and CG-B.

The protein resides in the secreted. Functionally, promotes spermatogenesis and ovulation by stimulating the testes and ovaries to synthesize steroids. This is Lutropin/choriogonadotropin subunit beta (LHB) from Equus caballus (Horse).